Consider the following 108-residue polypeptide: MNPFKMQQMLSQAKEMQEQMQEKLAATVVEASSGGGAVSVKMNGKKELLKLTIDPAAVLSLSGANPDVEMLEDLITAAINEAGRRAEEILKSSMQGLLGGLNLPPGLF.

Belongs to the YbaB/EbfC family. As to quaternary structure, homodimer.

The protein localises to the cytoplasm. Its subcellular location is the nucleoid. Binds to DNA and alters its conformation. May be involved in regulation of gene expression, nucleoid organization and DNA protection. The sequence is that of Nucleoid-associated protein ACP_0492 from Acidobacterium capsulatum (strain ATCC 51196 / DSM 11244 / BCRC 80197 / JCM 7670 / NBRC 15755 / NCIMB 13165 / 161).